A 468-amino-acid polypeptide reads, in one-letter code: 6-phospho-beta-galactosidase (468 aa).

5 residues coordinate D-galactose 6-phosphate: Gln-19, His-116, Asn-159, Glu-160, and Asn-297. The active-site Proton donor is the Glu-160. The active-site Nucleophile is Glu-375. Residues Ser-428, Trp-429, Lys-435, and Tyr-437 each contribute to the D-galactose 6-phosphate site.

The protein belongs to the glycosyl hydrolase 1 family.

It catalyses the reaction a 6-phospho-beta-D-galactoside + H2O = D-galactose 6-phosphate + an alcohol. It participates in carbohydrate metabolism; lactose degradation; D-galactose 6-phosphate and beta-D-glucose from lactose 6-phosphate: step 1/1. The polypeptide is 6-phospho-beta-galactosidase (Streptococcus pyogenes serotype M4 (strain MGAS10750)).